We begin with the raw amino-acid sequence, 874 residues long: Alanine--tRNA ligase (874 aa).

Zn(2+) is bound by residues H562, H566, C664, and H668.

The protein belongs to the class-II aminoacyl-tRNA synthetase family. Zn(2+) is required as a cofactor.

It is found in the cytoplasm. The catalysed reaction is tRNA(Ala) + L-alanine + ATP = L-alanyl-tRNA(Ala) + AMP + diphosphate. Its function is as follows. Catalyzes the attachment of alanine to tRNA(Ala) in a two-step reaction: alanine is first activated by ATP to form Ala-AMP and then transferred to the acceptor end of tRNA(Ala). Also edits incorrectly charged Ser-tRNA(Ala) and Gly-tRNA(Ala) via its editing domain. This is Alanine--tRNA ligase from Shewanella denitrificans (strain OS217 / ATCC BAA-1090 / DSM 15013).